Here is a 1298-residue protein sequence, read N- to C-terminus: MASENKQRPGSPGPTDGPPPTPSPDRDERGALGWGAETEEGGDDPDHDPDHPHDLDDARRDGRAPAAGTDAGEDAGDAVSPRQLALLASMVEEAVRTIPTPDPAASPPRTPAFRADDDDGDEYDDAADAAGDRAPARGREREAPLRGAYPDPTDRLSPRPPAQPPRRRRHGRWRPSASSTSSDSGSSSSSSASSSSSSSDEDEDDDGNDAADHAREARAVGRGPSSAAPAAPGRTPPPPGPPPLSEAAPKPRAAARTPAASAGRIERRRARAAVAGRDATGRFTAGQPRRVELDADATSGAFYARYRDGYVSGEPWPGAGPPPPGRVLYGGLGDSRPGLWGAPEAEEARRRFEASGAPAAVWAPELGDAAQQYALITRLLYTPDAEAMGWLQNPRVVPGDVALDQACFRISGAARNSSSFITGSVARAVPHLGYAMAAGRFGWGLAHAAAAVAMSRRYDRAQKGFLLTSLRRAYAPLLARENAALTGAAGSPGAGADDEGVAAVAAAAPGERAVPAGYGAAGILAALGRLSAAPASPAGGDDPDAARHADADDDAGRRAQAGRVAVECLAACRGILEALAEGFDGDLAAVPGLAGARPASPPRPEGPAGPASPPPPHADAPRLRAWLRELRFVRDALVLMRLRGDLRVAGGSEAAVAAVRAVSLVAGALGPALPRDPRLPSSAAAAAADLLFDNQSLRPLLAAAASAPDAADALAAAAASAAPREGRKRKSPGPARPPGGGGPRPPKTKKSGADAPGSDARAPLPAPAPPSTPPGPEPAPAQPAAPRAAAAQARPRPVAVSRRPAEGPDPLGGWRRQPPGPSHTAAPAAAALEAYCSPRAVAELTDHPLFPVPWRPALMFDPRALASIAARCAGPAPAAQAACGGGDDDDNPHPHGAAGGRLFGPLRASGPLRRMAAWMRQIPDPEDVRVVVLYSPLPGEDLAGGGASGGPPEWSAERGGLSCLLAALANRLCGPDTAAWAGNWTGAPDVSALGAQGVLLLSTRDLAFAGAVEFLGLLASAGDRRLIVVNTVRACDWPADGPAVSRQHAYLACELLPAVQCAVRWPAARDLRRTVLASGRVFGPGVFARVEAAHARLYPDAPPLRLCRGGNVRYRVRTRFGPDTPVPMSPREYRRAVLPALDGRAAASGTTDAMAPGAPDFCEEEAHSHAACARWGLGAPLRPVYVALGREAVRAGPARWRGPRRDFCARALLEPDDDAPPLVLRGDDDGPGALPPAPPGIRWASATGRSGTVLAAAGAVEVLGAEAGLATPPRREVVDWEGAWDEDDGGAFEGDGVL.

Disordered regions lie at residues 1 to 82 (MASE…VSPR), 94 to 291 (AVRT…PRRV), 534 to 554 (PASP…ADDD), 594 to 620 (AGAR…HADA), 718 to 826 (AASA…HTAA), and 877 to 904 (PAAQ…RLFG). Pro residues predominate over residues 11-23 (SPGPTDGPPPTPS). The segment covering 37–47 (ETEEGGDDPDH) has biased composition (acidic residues). The span at 48–63 (DPDHPHDLDDARRDGR) shows a compositional bias: basic and acidic residues. Residues 100 to 110 (TPDPAASPPRT) show a composition bias toward pro residues. A compositionally biased stretch (acidic residues) spans 116–127 (DDDDGDEYDDAA). A compositionally biased stretch (basic and acidic residues) spans 130–144 (AGDRAPARGREREAP). Residues 174 to 198 (RPSASSTSSDSGSSSSSSASSSSSS) show a composition bias toward low complexity. Residues 199-209 (SDEDEDDDGND) show a composition bias toward acidic residues. Positions 210 to 219 (AADHAREARA) are enriched in basic and acidic residues. The segment covering 222 to 233 (RGPSSAAPAAPG) has biased composition (low complexity). Positions 234 to 244 (RTPPPPGPPPL) are enriched in pro residues. Composition is skewed to low complexity over residues 245 to 263 (SEAA…ASAG) and 272 to 282 (AAVAGRDATGR). A DNA-binding region spans residues 262–490 (AGRIERRRAR…ENAALTGAAG (229 aa)). Basic and acidic residues predominate over residues 544-554 (DAARHADADDD). 2 stretches are compositionally biased toward pro residues: residues 599–618 (ASPP…PPHA) and 764–783 (LPAP…PAQP). A compositionally biased stretch (low complexity) spans 784-802 (AAPRAAAAQARPRPVAVSR).

It belongs to the herpesviridae ICP4 family. In terms of assembly, forms homodimers. Interacts with transcriptional regulator ICP27; this interaction is required for proper incorporation of ICP4 into virions. Interacts with host TBP and host TAF1; these interactions help the stabilization of the pre-nitiation complex on specific promoters. Interacts with host GTF2B. Post-translationally, ADP-ribosylated. The long stretch of Ser is a major site of phosphorylation. Only the phosphorylated forms are capable of interacting with beta or gamma genes.

The protein localises to the host nucleus. Its subcellular location is the host cytoplasm. The protein resides in the virion tegument. Its function is as follows. Plays an essential role in the regulation of viral gene expression by both activating and repressing host RNA polymerase II-mediated transcription. Binds with high affinity to the sequence 5'-ATCGTC-3'. Activates transcription by recruiting a form of the host TFIID to promoters and stabilizing the pre-initiation complex formation. Negatively regulates its own transcription. This immediate early (IE) protein is absolutely necessary for the transition from IE transcription to later viral gene transcription. This chain is Major viral transcription factor ICP4 (ICP4), found in Human herpesvirus 1 (strain 17) (HHV-1).